The primary structure comprises 365 residues: Histidinol-phosphate aminotransferase (365 aa).

The segment at 1–22 is disordered; sequence MSRPVPNPGILDIAPYTPGKSP. At Lys221 the chain carries N6-(pyridoxal phosphate)lysine.

It belongs to the class-II pyridoxal-phosphate-dependent aminotransferase family. Histidinol-phosphate aminotransferase subfamily. As to quaternary structure, homodimer. Requires pyridoxal 5'-phosphate as cofactor.

It catalyses the reaction L-histidinol phosphate + 2-oxoglutarate = 3-(imidazol-4-yl)-2-oxopropyl phosphate + L-glutamate. It participates in amino-acid biosynthesis; L-histidine biosynthesis; L-histidine from 5-phospho-alpha-D-ribose 1-diphosphate: step 7/9. In Nitrobacter winogradskyi (strain ATCC 25391 / DSM 10237 / CIP 104748 / NCIMB 11846 / Nb-255), this protein is Histidinol-phosphate aminotransferase.